The following is a 1155-amino-acid chain: DNA-directed RNA polymerase subunit beta (1155 aa).

This sequence belongs to the RNA polymerase beta chain family. The RNAP catalytic core consists of 2 alpha, 1 beta, 1 beta' and 1 omega subunit. When a sigma factor is associated with the core the holoenzyme is formed, which can initiate transcription.

The catalysed reaction is RNA(n) + a ribonucleoside 5'-triphosphate = RNA(n+1) + diphosphate. Its function is as follows. DNA-dependent RNA polymerase catalyzes the transcription of DNA into RNA using the four ribonucleoside triphosphates as substrates. This Borrelia recurrentis (strain A1) protein is DNA-directed RNA polymerase subunit beta.